The chain runs to 305 residues: Ribonuclease Z (305 aa).

Zn(2+) contacts are provided by H63, H65, D67, H68, H142, D209, and H267. The active-site Proton acceptor is the D67.

It belongs to the RNase Z family. In terms of assembly, homodimer. Zn(2+) serves as cofactor.

It carries out the reaction Endonucleolytic cleavage of RNA, removing extra 3' nucleotides from tRNA precursor, generating 3' termini of tRNAs. A 3'-hydroxy group is left at the tRNA terminus and a 5'-phosphoryl group is left at the trailer molecule.. In terms of biological role, zinc phosphodiesterase, which displays some tRNA 3'-processing endonuclease activity. Probably involved in tRNA maturation, by removing a 3'-trailer from precursor tRNA. The polypeptide is Ribonuclease Z (Nocardia farcinica (strain IFM 10152)).